The primary structure comprises 465 residues: MKHIVKHIHFVGIGGAGMSGIAEVLANLGYAVSGSDLSRNAVTDRLEALGARIAIGHDAANIEGANAVVVSTAVRSDNPEVLAARAKRVPIVQRAVMLAELMRLKQGIAIAGTHGKTTTTSLVASVLAAGGLDPTFVIGGRLISAGANARLGTGDFIVAEADESDASFLNLYPVIEVITNIDADHMDTYGHDFARLKQAFIEFTQRLPFYGSAVVCVDDPNVRQIIPFISKPVVRYGLSPDAQVRAEDIDARDGRMHFTVIREGRAPLAVVLNMPGLHNVQNALAAIAIATDLGVSDDAIQLALAEFNGVGRRFQRYGEVPSADGGQYTLIDDYGHHPVEMAATIAAARGAFPGRRLVLAFQPHRYTRTRDCFDDFVNVLSTVDALVLTEVYAAGEAAIPTASGDALSRALRAAGKVDPVFVATVDDVPDALAKVARNGDVVITMGAGSIGGVPAKLVQHIQQKA.

Position 112-118 (112-118) interacts with ATP; it reads GTHGKTT.

The protein belongs to the MurCDEF family.

It is found in the cytoplasm. It catalyses the reaction UDP-N-acetyl-alpha-D-muramate + L-alanine + ATP = UDP-N-acetyl-alpha-D-muramoyl-L-alanine + ADP + phosphate + H(+). It participates in cell wall biogenesis; peptidoglycan biosynthesis. Its function is as follows. Cell wall formation. In Burkholderia cenocepacia (strain ATCC BAA-245 / DSM 16553 / LMG 16656 / NCTC 13227 / J2315 / CF5610) (Burkholderia cepacia (strain J2315)), this protein is UDP-N-acetylmuramate--L-alanine ligase.